We begin with the raw amino-acid sequence, 193 residues long: ATP-dependent Clp protease proteolytic subunit (193 aa).

Ser98 functions as the Nucleophile in the catalytic mechanism. Residue His123 is part of the active site.

It belongs to the peptidase S14 family. As to quaternary structure, fourteen ClpP subunits assemble into 2 heptameric rings which stack back to back to give a disk-like structure with a central cavity, resembling the structure of eukaryotic proteasomes.

Its subcellular location is the cytoplasm. The enzyme catalyses Hydrolysis of proteins to small peptides in the presence of ATP and magnesium. alpha-casein is the usual test substrate. In the absence of ATP, only oligopeptides shorter than five residues are hydrolyzed (such as succinyl-Leu-Tyr-|-NHMec, and Leu-Tyr-Leu-|-Tyr-Trp, in which cleavage of the -Tyr-|-Leu- and -Tyr-|-Trp bonds also occurs).. Functionally, cleaves peptides in various proteins in a process that requires ATP hydrolysis. Has a chymotrypsin-like activity. Plays a major role in the degradation of misfolded proteins. The chain is ATP-dependent Clp protease proteolytic subunit from Agathobacter rectalis (strain ATCC 33656 / DSM 3377 / JCM 17463 / KCTC 5835 / VPI 0990) (Eubacterium rectale).